A 358-amino-acid polypeptide reads, in one-letter code: 3-dehydroquinate synthase (358 aa).

Residues 70–75 (DGEQYK), 104–108 (GVVGD), 128–129 (TT), K141, K150, and 168–171 (CLNT) each bind NAD(+). Positions 183, 246, and 263 each coordinate Zn(2+).

Belongs to the sugar phosphate cyclases superfamily. Dehydroquinate synthase family. Co(2+) is required as a cofactor. Requires Zn(2+) as cofactor. The cofactor is NAD(+).

It localises to the cytoplasm. The catalysed reaction is 7-phospho-2-dehydro-3-deoxy-D-arabino-heptonate = 3-dehydroquinate + phosphate. It functions in the pathway metabolic intermediate biosynthesis; chorismate biosynthesis; chorismate from D-erythrose 4-phosphate and phosphoenolpyruvate: step 2/7. Its function is as follows. Catalyzes the conversion of 3-deoxy-D-arabino-heptulosonate 7-phosphate (DAHP) to dehydroquinate (DHQ). The sequence is that of 3-dehydroquinate synthase from Shewanella sediminis (strain HAW-EB3).